Reading from the N-terminus, the 1090-residue chain is UPF0507 protein SCY_4172 (1090 aa).

The region spanning 289 to 436 (FSVNQLLTDF…FEDFNKNTGN (148 aa)) is the VPS9 domain.

It belongs to the UPF0507 family.

This Saccharomyces cerevisiae (strain YJM789) (Baker's yeast) protein is UPF0507 protein SCY_4172.